A 475-amino-acid chain; its full sequence is Chromosomal replication initiator protein DnaA (475 aa).

The domain I, interacts with DnaA modulators stretch occupies residues 1–71 (MTNDTWNEVR…RQLSAHGAGA (71 aa)). The interval 71–133 (ADRVKFTVSP…PAQPRELPGA (63 aa)) is domain II. The span at 107-127 (APAPVHHTAPAPAPVAAPAQP) shows a compositional bias: low complexity. Residues 107 to 129 (APAPVHHTAPAPAPVAAPAQPRE) are disordered. Positions 134–355 (KLNPNFTFAN…GALTRLFAFA (222 aa)) are domain III, AAA+ region. 4 residues coordinate ATP: Gly-178, Gly-180, Lys-181, and Thr-182. A domain IV, binds dsDNA region spans residues 356-475 (DLVRREVTVD…AELLRRTLEA (120 aa)).

The protein belongs to the DnaA family. In terms of assembly, oligomerizes as a right-handed, spiral filament on DNA at oriC.

The protein localises to the cytoplasm. Functionally, plays an essential role in the initiation and regulation of chromosomal replication. ATP-DnaA binds to the origin of replication (oriC) to initiate formation of the DNA replication initiation complex once per cell cycle. Binds the DnaA box (a 9 base pair repeat at the origin) and separates the double-stranded (ds)DNA. Forms a right-handed helical filament on oriC DNA; dsDNA binds to the exterior of the filament while single-stranded (ss)DNA is stabiized in the filament's interior. The ATP-DnaA-oriC complex binds and stabilizes one strand of the AT-rich DNA unwinding element (DUE), permitting loading of DNA polymerase. After initiation quickly degrades to an ADP-DnaA complex that is not apt for DNA replication. Binds acidic phospholipids. This chain is Chromosomal replication initiator protein DnaA, found in Jannaschia sp. (strain CCS1).